We begin with the raw amino-acid sequence, 946 residues long: MASIDNVFSLGTRFSIPENPKRSILKHATTSSFSARTQTRWRAPILRRSFTVLCELKTGSSSSGETNNSPAADDFVTRVLKENPSQVEPRYRVGDKLYNLKEREDLSKGTNAATGAFEFIKRKFDSKKKTETDKSEESVYLSDILREYKGKLYVPEQVFGPELSEEEEFEKNVKDLPKMSLEDFRKAMENDKVKLLTSKEVSGVSYTSGYRGFIVDLKEIPGVKSLQRTKWSMKLEVGEAQALLKEYTGPQYEIERHMTSWVGKVADFPNPVASSISSRVMVELGMVTAVIAAAAVVVGGFLASAVFAVTSFAFVTTVYVVWPIAKPFLKLFVGVFLGVLEKSWDYIVDVLADGGIFSRISDFYTFGGVASSLEMLKPILLVVMTMVLLVRFTLSRRPKNFRKWDLWQGIAFSQSKAEARVDGSTGVKFADVAGIDEAVDELQELVKYLKNPDLFDKMGIKPPHGVLLEGPPGCGKTLVAKAIAGEAGVPFYQMAGSEFVEVLVGVGSARIRDLFKRAKVNKPSVIFIDEIDALATRRQGIFKENSDQLYNAATQERETTLNQLLIELDGFDTGKGVIFLGATNRRDLLDPALLRPGRFDRKIRVRPPNAKGRLDILKIHASKVKMSDSVDLSSYASNLPGWSGAKLAQLVQEAALVAVRKTHNSILQSDMDDAVDRLTVGPTRIGLELGHQGQCRRATTEVGVAITSHLLLRYENAKIERCDRVSIIPRGQTLSQVVFHRLDDESYMFGRLPQLLHRLQVLLGGRAAEEVIYGSDTSKASVDYLSDASWLARKILTIWNLENPMVIHGEPPPWRKRPQFVGPRLDFEGSLYDDYDLVEPPVNFNMDDEVAHRSEELISQMYNKTVSLLRQNQTALLKTVKVLLNQKEISGEAIDFILDHYPPQTPLNSLLQEQNPGSLPFVPEHLRRESGDFVLVNHSTDVNAQV.

The transit peptide at 1-54 directs the protein to the chloroplast; that stretch reads MASIDNVFSLGTRFSIPENPKRSILKHATTSSFSARTQTRWRAPILRRSFTVLC. The next 3 helical transmembrane spans lie at 289 to 309, 320 to 340, and 369 to 389; these read AVIA…VFAV, VVWP…LGVL, and VASS…MVLL. Residue 470 to 477 coordinates ATP; the sequence is GPPGCGKT.

In the N-terminal section; belongs to the AAA ATPase family. This sequence in the C-terminal section; belongs to the peptidase M41 family. As to quaternary structure, oligomer.

It localises to the plastid. The protein localises to the chloroplast inner membrane. Functions in chloroplast biogenesis and chloroplast division. Required for plastid development during embryogenesis. Might be involved in chaperone functions or play a structural role in the thylakoid FtsH complex. The protein is Probable inactive ATP-dependent zinc metalloprotease FTSHI 1, chloroplastic of Arabidopsis thaliana (Mouse-ear cress).